The chain runs to 398 residues: Enolase (398 aa).

A (2R)-2-phosphoglycerate-binding site is contributed by glutamine 154. Catalysis depends on glutamate 196, which acts as the Proton donor. Mg(2+)-binding residues include aspartate 232, glutamate 273, and aspartate 300. (2R)-2-phosphoglycerate is bound by residues lysine 325, arginine 354, serine 355, and lysine 376. The active-site Proton acceptor is the lysine 325.

Belongs to the enolase family. Mg(2+) serves as cofactor.

The protein resides in the cytoplasm. Its subcellular location is the secreted. It localises to the cell surface. It carries out the reaction (2R)-2-phosphoglycerate = phosphoenolpyruvate + H2O. Its pathway is carbohydrate degradation; glycolysis; pyruvate from D-glyceraldehyde 3-phosphate: step 4/5. Functionally, catalyzes the reversible conversion of 2-phosphoglycerate (2-PG) into phosphoenolpyruvate (PEP). It is essential for the degradation of carbohydrates via glycolysis. The sequence is that of Enolase from Halobacterium salinarum (strain ATCC 700922 / JCM 11081 / NRC-1) (Halobacterium halobium).